We begin with the raw amino-acid sequence, 295 residues long: Methionine aminopeptidase (295 aa).

Position 62 (His-62) interacts with substrate. 3 residues coordinate a divalent metal cation: Asp-82, Asp-93, and His-153. His-161 lines the substrate pocket. A divalent metal cation-binding residues include Glu-187 and Glu-280.

It belongs to the peptidase M24A family. Methionine aminopeptidase archaeal type 2 subfamily. Monomer. Co(2+) serves as cofactor. Zn(2+) is required as a cofactor. It depends on Mn(2+) as a cofactor. The cofactor is Fe(2+).

It carries out the reaction Release of N-terminal amino acids, preferentially methionine, from peptides and arylamides.. In terms of biological role, removes the N-terminal methionine from nascent proteins. The N-terminal methionine is often cleaved when the second residue in the primary sequence is small and uncharged (Met-Ala-, Cys, Gly, Pro, Ser, Thr, or Val). The protein is Methionine aminopeptidase of Pyrococcus abyssi (strain GE5 / Orsay).